The primary structure comprises 320 residues: Putative thiosulfate sulfurtransferase 2 (320 aa).

2 Rhodanese domains span residues His18–Ser125 and Ala154–Pro267. Cys233 serves as the catalytic Cysteine persulfide intermediate. Arg238 is a substrate binding site.

It catalyses the reaction thiosulfate + hydrogen cyanide = thiocyanate + sulfite + 2 H(+). May be a sulfotransferase involved in the formation of thiosulfate. The protein is Putative thiosulfate sulfurtransferase 2 (cysA2) of Mycobacterium bovis (strain ATCC BAA-935 / AF2122/97).